Reading from the N-terminus, the 249-residue chain is DNA repair protein RecO (249 aa).

The protein belongs to the RecO family.

In terms of biological role, involved in DNA repair and RecF pathway recombination. This is DNA repair protein RecO from Mycoplasma mycoides subsp. mycoides SC (strain CCUG 32753 / NCTC 10114 / PG1).